The primary structure comprises 185 residues: Protein GrpE (185 aa).

Residues 1–37 are disordered; it reads MEEQEEKQYNQNIQDNEEGTQMREELQESTSAQQTLQ. The segment covering 28-37 has biased composition (polar residues); sequence ESTSAQQTLQ.

Belongs to the GrpE family. As to quaternary structure, homodimer.

It is found in the cytoplasm. Its function is as follows. Participates actively in the response to hyperosmotic and heat shock by preventing the aggregation of stress-denatured proteins, in association with DnaK and GrpE. It is the nucleotide exchange factor for DnaK and may function as a thermosensor. Unfolded proteins bind initially to DnaJ; upon interaction with the DnaJ-bound protein, DnaK hydrolyzes its bound ATP, resulting in the formation of a stable complex. GrpE releases ADP from DnaK; ATP binding to DnaK triggers the release of the substrate protein, thus completing the reaction cycle. Several rounds of ATP-dependent interactions between DnaJ, DnaK and GrpE are required for fully efficient folding. The chain is Protein GrpE from Helicobacter hepaticus (strain ATCC 51449 / 3B1).